The chain runs to 357 residues: Putative DENN domain-containing protein 10 B (357 aa).

The uDENN domain maps to 1–140 (MAAAELADTQ…TKGICQSEEN (140 aa)). The cDENN domain maps to 159-299 (IKDIVSQFGM…PEKSESQVIQ (141 aa)). The 57-residue stretch at 301-357 (IALKTREIFTNLAPFSEVSADGEKRVLNLEALKQKRFPPATENFLYHLAAAEQMLKI) folds into the dDENN domain.

Belongs to the DENND10 family.

It is found in the late endosome. In terms of biological role, may be a guanine nucleotide exchange factor (GEF). This chain is Putative DENN domain-containing protein 10 B, found in Homo sapiens (Human).